A 331-amino-acid polypeptide reads, in one-letter code: MPKPLVDFGNKPMILHQIEALKGAGVTEVVLAINHQQPEVMLNFVKEYEKKLEIKITFSQETEPLGTAGPLALARDKLVDESGQPFFVLNSDVICEYPLLEMIEFHKTNRAEASIMVTEVDDPSKYGVVVTEEGTARVESFVEKPKHFVGNKINAGIYLLSPSVLDRIELRRTSIEKEIFPKIASEKKLYAMVLPGFWMDIGQPKDYITGQRMYLNSLREKTPQELATGDNIIGNVLVHESAVIGEGCLIGPDVVIGPGCVIDSGVRLFGCTVMRGVWIKEHACISNSIVGWDSTVGRWARVFNITVLGKDVNVADAEVYNSGVVIEEQGL.

A diphosphate-binding site is contributed by Lys-3. Residues Gly-66, Asn-90, Asp-92, Gly-127, and Asn-154 each contribute to the GDP-alpha-D-mannose site.

The protein belongs to the transferase hexapeptide repeat family.

The catalysed reaction is alpha-D-mannose 1-phosphate + GTP + H(+) = GDP-alpha-D-mannose + diphosphate. It functions in the pathway nucleotide-sugar biosynthesis; GDP-alpha-D-mannose biosynthesis; GDP-alpha-D-mannose from alpha-D-mannose 1-phosphate (GTP route): step 1/1. Functionally, catalyzes a reaction of the Smirnoff-Wheeler pathway, the major route to ascorbate biosynthesis in plants. The polypeptide is Probable mannose-1-phosphate guanylyltransferase 3 (Arabidopsis thaliana (Mouse-ear cress)).